A 788-amino-acid chain; its full sequence is Cyclin-F (788 aa).

Positions 20 to 28 match the Nuclear localization signal 1 motif; the sequence is KRRIRRRPR. The F-box domain maps to 29 to 76; sequence NLTILNLPEDALFHILKWLSVGDILAVRAVHSHLKYLVDNHASVWACA. The 115-residue stretch at 291-405 folds into the Cyclin N-terminal domain; the sequence is HAVNKQRVFS…EVVSALDGKI (115 aa). 4 consecutive short sequence motifs (d box) follow at residues 310-313, 343-346, 349-352, and 351-354; these read RYIL, RRRL, RYRL, and RLQL. Disordered stretches follow at residues 566 to 585 and 700 to 788; these read SARR…RGSF and TSGY…FLKL. The short motif at 568-574 is the Nuclear localization signal 2 element; that stretch reads RRTKRKR. Positions 582–766 are PEST; the sequence is RGSFVTTPTA…ESCAPQQQVK (185 aa). Composition is skewed to polar residues over residues 700–716 and 723–738; these read TSGY…DSGR and RSTS…NTQP. The D box 5 motif lies at 767–770; sequence RKNL.

Belongs to the cyclin family. Cyclin AB subfamily. As to quaternary structure, component of the SCF(CCNF) complex consisting of CUL1, RBX1, SKP1 and CCNF. Interacts with SKP1. Interacts with CUL1. Interacts with CCNB1; interaction is required for nuclear localization of CCNB1. Interacts with CCP110; this interaction leads to CCP110 ubiquitination and degradation via the proteasome pathway. Interacts (via the Cyclin N-terminal domain) with MYBL2/BMYB. Interacts with FZR1/CDH1 (via N-terminus). Interacts with RRM2 (via Cy motif and when phosphorylated at 'Thr-33'); the interaction occurs exclusively in G2 and early M. Interacts with CDC6 (via Cy motif); the interaction takes place during G2 and M phase. Post-translationally, degraded when the spindle assembly checkpoint is activated during the G2-M transition. Degradation is not dependent on the proteasome or ubiquitin and depends on the C-terminal PEST sequence. Phosphorylated just before cells enter into mitosis. In terms of processing, ubiquitinated by the anaphase-promoting complex (APC/C); leading to its degradation by the proteasome.

It is found in the nucleus. Its subcellular location is the cytoplasm. The protein resides in the perinuclear region. The protein localises to the cytoskeleton. It localises to the microtubule organizing center. It is found in the centrosome. Its subcellular location is the centriole. In terms of biological role, substrate recognition component of a SCF (SKP1-CUL1-F-box protein) E3 ubiquitin-protein ligase complex which mediates the ubiquitination and subsequent proteasomal degradation of target proteins. The SCF(CCNF) E3 ubiquitin-protein ligase complex is an integral component of the ubiquitin proteasome system (UPS) and links proteasome degradation to the cell cycle. Mediates the substrate recognition and the proteasomal degradation of various target proteins involved in the regulation of cell cycle progression and in the maintenance of genome stability. Mediates the ubiquitination and subsequent proteasomal degradation of CP110 during G2 phase, thereby acting as an inhibitor of centrosome reduplication. In G2, mediates the ubiquitination and proteasomal degradation of CDC6, thereby suppressing DNA re-replication and preventing genome instability. Involved in the ubiquitination and degradation of the substrate adapter CDH1 of the anaphase-promoting complex (APC/C), thereby acting as an antagonist of APC/C in regulating G1 progression and S phase entry. May play a role in the G2 cell cycle checkpoint control after DNA damage, possibly by promoting the ubiquitination of MYBL2/BMYB. This is Cyclin-F (CCNF) from Bos taurus (Bovine).